The primary structure comprises 221 residues: Transcriptional regulator GfcR (221 aa).

The disordered stretch occupies residues 35–59 (ASWLVERSQPTDNSQSSSANNPTEA). Residues 42-57 (SQPTDNSQSSSANNPT) are compositionally biased toward polar residues.

This sequence belongs to the purine/pyrimidine phosphoribosyltransferase family. GfcR subfamily.

Its function is as follows. DNA-binding transcriptional regulator that functions as a regulator of central sugar catabolic pathways. The protein is Transcriptional regulator GfcR of Haloquadratum walsbyi (strain DSM 16790 / HBSQ001).